Consider the following 557-residue polypeptide: Membrane protein insertase YidC (557 aa).

The next 5 membrane-spanning stretches (helical) occupy residues 3–23 (IKRT…FDNW), 363–383 (FVGN…AVFF), 437–457 (LPVV…LASV), 476–496 (PYFI…KLNP), and 507–527 (MMFM…GLVL).

Belongs to the OXA1/ALB3/YidC family. Type 1 subfamily. Interacts with the Sec translocase complex via SecD. Specifically interacts with transmembrane segments of nascent integral membrane proteins during membrane integration.

It localises to the cell inner membrane. Its function is as follows. Required for the insertion and/or proper folding and/or complex formation of integral membrane proteins into the membrane. Involved in integration of membrane proteins that insert both dependently and independently of the Sec translocase complex, as well as at least some lipoproteins. Aids folding of multispanning membrane proteins. The sequence is that of Membrane protein insertase YidC from Burkholderia thailandensis (strain ATCC 700388 / DSM 13276 / CCUG 48851 / CIP 106301 / E264).